A 735-amino-acid polypeptide reads, in one-letter code: Glycogen [starch] synthase, muscle (735 aa).

At Ser8 the chain carries Phosphoserine; by AMPK and PKA. Ser11 carries the phosphoserine modification. Residue Lys39 participates in UDP binding. 2 residues coordinate UDP-alpha-D-glucose: His205 and Arg211. Alpha-D-glucose 6-phosphate-binding residues include His291, Glu292, Gln294, His297, and Lys301. A UDP-binding site is contributed by Arg331. A UDP-alpha-D-glucose-binding site is contributed by Arg331. Phosphoserine is present on Ser412. His501 contacts alpha-D-glucose 6-phosphate. UDP-alpha-D-glucose contacts are provided by Glu510, Trp512, and Gly513. Thr515 contacts UDP. Positions 582 and 586 each coordinate alpha-D-glucose 6-phosphate. The interval 629 to 735 is disordered; the sequence is DATQGYRYPR…PASSLGEERN (107 aa). Residue Ser641 is modified to Phosphoserine; by DYRK2, GSK3-alpha, GSK3-beta and PASK. 2 positions are modified to phosphoserine; by GSK3-alpha and GSK3-beta: Ser645 and Ser649. Position 652 is a phosphoserine (Ser652). The residue at position 653 (Ser653) is a Phosphoserine; by GSK3-alpha and GSK3-beta. Position 657 is a phosphoserine; by CK2 (Ser657). The span at 658–681 shows a compositional bias: acidic residues; the sequence is EDEEEPRDGLPEEDGERYDEDEEA. A compositionally biased stretch (basic and acidic residues) spans 682 to 695; it reads AKDRRNIRAPEWPR. Ser698 carries the phosphoserine modification. A compositionally biased stretch (low complexity) spans 698–735; that stretch reads SCTSSSGGSKRSNSVDTSSLSTPSEPLSPASSLGEERN. Thr700 is modified (phosphothreonine). Phosphoserine occurs at positions 709 and 711. Residue Thr719 is modified to Phosphothreonine. Residues Ser725 and Ser729 each carry the phosphoserine modification.

This sequence belongs to the glycosyltransferase 3 family. In terms of assembly, part of the GYS1-GYG1 complex, a heterooctamer composed of a tetramer of GYS1 and 2 dimers of GYG1, where each GYS1 protomer binds to one GYG1 subunit (via GYG1 C-terminus); the GYS1 tetramer may dissociate from GYG1 dimers to continue glycogen polymerization on its own. In terms of processing, phosphorylation at Ser-8 is required for modification of Ser-11 by casein kinase I. Post-translationally, phosphorylated at Ser-641 by PASK, leading to inactivation; phosphorylation by PASK is inhibited by glycogen. Dephosphorylation at Ser-641 and Ser-645 by PP1 activates the enzyme. Phosphorylation at Ser-8 by AMPK inactivates the enzyme activity. Phosphorylated at Ser-641 by DYRK2, leading to inactivation. Primed phosphorylation at Ser-657 (site 5) by CSNK2A1 and CSNK2A2 is required for inhibitory phosphorylation at Ser-641 (site 3a), Ser-645 (site 3b), Ser-649 (site 3c) and Ser-653 (site 4) by GSK3A and GSK3B.

It catalyses the reaction [(1-&gt;4)-alpha-D-glucosyl](n) + UDP-alpha-D-glucose = [(1-&gt;4)-alpha-D-glucosyl](n+1) + UDP + H(+). Its pathway is glycan biosynthesis; glycogen biosynthesis. With respect to regulation, allosteric activation by glucose-6-phosphate. Phosphorylation reduces the activity towards UDP-glucose. When in the non-phosphorylated state, glycogen synthase does not require glucose-6-phosphate as an allosteric activator; when phosphorylated it does. Glycogen synthase participates in the glycogen biosynthetic process along with glycogenin and glycogen branching enzyme. Extends the primer composed of a few glucose units formed by glycogenin by adding new glucose units to it. In this context, glycogen synthase transfers the glycosyl residue from UDP-Glc to the non-reducing end of alpha-1,4-glucan. The chain is Glycogen [starch] synthase, muscle from Oryctolagus cuniculus (Rabbit).